The chain runs to 583 residues: 2-succinyl-5-enolpyruvyl-6-hydroxy-3-cyclohexene-1-carboxylate synthase (583 aa).

It belongs to the TPP enzyme family. MenD subfamily. As to quaternary structure, homodimer. The cofactor is Mg(2+). Requires Mn(2+) as cofactor. It depends on thiamine diphosphate as a cofactor.

The catalysed reaction is isochorismate + 2-oxoglutarate + H(+) = 5-enolpyruvoyl-6-hydroxy-2-succinyl-cyclohex-3-ene-1-carboxylate + CO2. The protein operates within quinol/quinone metabolism; 1,4-dihydroxy-2-naphthoate biosynthesis; 1,4-dihydroxy-2-naphthoate from chorismate: step 2/7. Its pathway is quinol/quinone metabolism; menaquinone biosynthesis. Catalyzes the thiamine diphosphate-dependent decarboxylation of 2-oxoglutarate and the subsequent addition of the resulting succinic semialdehyde-thiamine pyrophosphate anion to isochorismate to yield 2-succinyl-5-enolpyruvyl-6-hydroxy-3-cyclohexene-1-carboxylate (SEPHCHC). This Roseiflexus sp. (strain RS-1) protein is 2-succinyl-5-enolpyruvyl-6-hydroxy-3-cyclohexene-1-carboxylate synthase.